A 189-amino-acid chain; its full sequence is Glucose-6-phosphate isomerase (189 aa).

Fe cation is bound by residues histidine 88, histidine 90, glutamate 97, and histidine 136.

Belongs to the archaeal-type GPI family. Homodimer. It depends on Fe cation as a cofactor.

The protein resides in the cytoplasm. The catalysed reaction is alpha-D-glucose 6-phosphate = beta-D-fructose 6-phosphate. Its pathway is carbohydrate degradation; glycolysis; D-glyceraldehyde 3-phosphate and glycerone phosphate from D-glucose: step 2/4. With respect to regulation, inhibited by mannose 6-phosphate, fructose 1-phosphate and fructose 1,6-bisphosphate. The chain is Glucose-6-phosphate isomerase (pgiA) from Pyrococcus furiosus (strain ATCC 43587 / DSM 3638 / JCM 8422 / Vc1).